A 146-amino-acid polypeptide reads, in one-letter code: Transcriptional regulator MraZ (146 aa).

SpoVT-AbrB domains lie at 5–50 and 77–120; these read SSFH…TFNE and ACEC…SREQ.

Belongs to the MraZ family. As to quaternary structure, forms oligomers.

Its subcellular location is the cytoplasm. The protein resides in the nucleoid. This chain is Transcriptional regulator MraZ, found in Desulforapulum autotrophicum (strain ATCC 43914 / DSM 3382 / VKM B-1955 / HRM2) (Desulfobacterium autotrophicum).